The primary structure comprises 1075 residues: Nuclear factor of activated T-cells, cytoplasmic 3 (1075 aa).

Thr-2 is subject to N-acetylthreonine. A disordered region spans residues 18 to 37 (FGEDGAPAPPPPGSRPADLE). Residues 109-114 (PSIQIT) form a calcineurin-binding region. A disordered region spans residues 205 to 306 (LGSPLTSPGG…PGHSPRGSVT (102 aa)). Tandem repeats lie at residues 207 to 223 (SPLT…PGEE) and 236 to 252 (SPRQ…VTDE). The tract at residues 207 to 308 (SPLTSPGGSP…HSPRGSVTED (102 aa)) is 3 X SP repeats. The segment covering 236–253 (SPRQSPCHSPRSSVTDEN) has biased composition (polar residues). Low complexity predominate over residues 256–270 (SPRPASGPSSRPTSP). Positions 273 to 275 (KRR) match the Nuclear localization signal motif. Repeat unit 3 spans residues 292-308 (SPVPSPGHSPRGSVTED). Residues Ser-344 and Ser-372 each carry the phosphoserine modification. The RHD domain maps to 415–596 (SSLPPLDWPL…IPVECSQRSA (182 aa)). The DNA-binding element occupies 444–451 (RAHYETEG). Positions 686 to 688 (KRK) match the Nuclear localization signal motif. 2 disordered regions span residues 711–739 (DLSS…SHDS) and 887–988 (SNTG…GLSA). Composition is skewed to polar residues over residues 724–739 (AQTQ…SHDS) and 887–912 (SNTG…QLQP). Low complexity-rich tracts occupy residues 916–939 (GPSH…SSPL) and 949–967 (PMPY…SPAT). Polar residues predominate over residues 970–981 (HSGQHSTQAQST). Residues 1032–1041 (TLDDVNEIIG) carry the Nuclear export signal motif. Positions 1049-1075 (VSQGAGVSRQAPLPSPESLDLGRSDGL) are disordered. A phosphoserine mark is found at Ser-1063 and Ser-1066.

As to quaternary structure, NFATC proteins bind to DNA as monomers. Member of the multicomponent NFATC transcription complex that consists of at least two components, a pre-existing cytoplasmic component NFATC2 and an inducible nuclear component NFATC1. Other members such as NFATC4, or members of the activating protein-1 family, MAF, GATA4 and Cbp/p300 can also bind the complex. Component of a promoter-binding complex composed of STAT3, NFATC3 and NFATC4; complex formation is enhanced by calcineurin. Interacts with TRIM17; this interaction prevents NFATC3 nuclear localization. Interacts with and ubiquitinated by STUB1/CHIP; HSPA1A/HSP70 is required as a co-chaperone. Post-translationally, ubiquitinated by STUB1/CHIP, leading to proteasomal degradation. Phosphorylated by NFATC-kinase; dephosphorylated by calcineurin. Predominantly expressed in thymus and is also found in peripheral blood leukocytes and kidney. In terms of tissue distribution, predominantly expressed in skeletal muscle. Also found weakly expressed in the thymus, kidney, testis, spleen, prostate, ovary, small intestine, heart, placenta and pancreas. As to expression, expressed in thymus and kidney. Expressed in thymus and skeletal muscle.

Its subcellular location is the cytoplasm. The protein localises to the nucleus. In terms of biological role, acts as a regulator of transcriptional activation. Binds to the TNFSF11/RANKL promoter region and promotes TNFSF11 transcription. Binding to the TNFSF11 promoter region is increased by high levels of Ca(2+) which induce NFATC3 expression and may lead to regulation of TNFSF11 expression in osteoblasts. Plays a role in promoting mesenteric arterial wall remodeling in response to the intermittent hypoxia-induced increase in EDN1 and ROCK signaling. As a result NFATC3 colocalizes with F-actin filaments, translocates to the nucleus and promotes transcription of the smooth muscle hypertrophy and differentiation marker ACTA2. Promotes lipopolysaccharide-induced apoptosis and hypertrophy in cardiomyocytes. Following JAK/STAT signaling activation and as part of a complex with NFATC4 and STAT3, binds to the alpha-beta E4 promoter region of CRYAB and activates transcription in cardiomyocytes. In conjunction with NFATC4, involved in embryonic heart development via maintenance of cardiomyocyte survival, proliferation and differentiation. Plays a role in the inducible expression of cytokine genes in T-cells, especially in the induction of the IL-2. Required for thymocyte maturation during DN3 to DN4 transition and during positive selection. Positively regulates macrophage-derived polymicrobial clearance, via binding to the promoter region and promoting transcription of NOS2 resulting in subsequent generation of nitric oxide. Involved in Ca(2+)-mediated transcriptional responses upon Ca(2+) influx via ORAI1 CRAC channels. In Homo sapiens (Human), this protein is Nuclear factor of activated T-cells, cytoplasmic 3.